A 92-amino-acid chain; its full sequence is Sperm-specific protein Phi-1 (92 aa).

A disordered region spans residues 1-92 (MPSPTRRSSK…RVRAKKKKKK (92 aa)). Composition is skewed to basic residues over residues 7-19 (RSSK…RSRS) and 29-92 (AAKR…KKKK).

In terms of tissue distribution, sperm.

The protein localises to the nucleus. The protein resides in the chromosome. Functionally, involved in nuclear basic protein transition: histones are replaced by spermatid specific proteins which are themselves replaced by protamines in late spermatids. The protein is Sperm-specific protein Phi-1 of Mytilus edulis (Blue mussel).